An 822-amino-acid polypeptide reads, in one-letter code: Nuclear factor of activated T-cells, cytoplasmic 1 (822 aa).

Residues 110-115 (PRIEIT) are calcineurin-binding. The interval 118–210 (LGLHHNNGQF…CVSPKTTDPE (93 aa)) is transactivation domain A (TAD-A). Polar residues predominate over residues 192–206 (PQTSPWQSPCVSPKT). The interval 192-289 (PQTSPWQSPC…HSSPRVSVTD (98 aa)) is disordered. A run of 2 repeats spans residues 195–211 (SPWQ…DPEE) and 225–241 (SPRH…VTEE). A 3 X SP repeats region spans residues 195-290 (SPWQSPCVSP…SSPRVSVTDD (96 aa)). A phosphoserine mark is found at serine 225 and serine 229. Residues 225–242 (SPRHSPSTSPRTSVTEES) are compositionally biased toward low complexity. Serine 237 is subject to Phosphoserine; by PKA. The Nuclear localization signal signature appears at 257-259 (KRK). Repeat unit 3 spans residues 274–290 (SPTPSPHSSPRVSVTDD). Serine 286 is subject to Phosphoserine; by PKA. The Nuclear export signal motif lies at 302 to 313 (SAIVAAINALST). Residues 400–582 (PSLPALDWQL…NPIECSQRSA (183 aa)) enclose the RHD domain. Residues 429-436 (RAHYETEG) mediate DNA binding. Positions 672 to 674 (KRK) match the Nuclear localization signal motif. The disordered stretch occupies residues 772–822 (GPGHLGLQRPAGGVLGGQEAPRPGGPHPGAPQLHPLNLSQSIVTRLTEPQP). Over residues 808–822 (NLSQSIVTRLTEPQP) the composition is skewed to polar residues.

As to quaternary structure, member of the multicomponent NFATC transcription complex that consists of at least two components, a pre-existing cytoplasmic component NFATC2 and an inducible nuclear component NFATC1. Other members such as NFATC4, NFATC3 or members of the activating protein-1 family, MAF, GATA4 and Cbp/p300 can also bind the complex. NFATC proteins bind to DNA as monomers. Interacts with HOMER2 and HOMER3; this interaction may compete with calcineurin/PPP3CA-binding and hence prevent NFATC1 dephosphorylation and activation. Interacts with TLE6/GRG6. In terms of processing, phosphorylated by NFATC-kinase and GSK3B; phosphorylation induces NFATC1 nuclear exit and dephosphorylation by calcineurin promotes nuclear import. Phosphorylation by PKA and DYRK2 negatively modulates nuclear accumulation, and promotes subsequent phosphorylation by GSK3B or casein kinase 1.

The protein localises to the cytoplasm. It is found in the nucleus. In terms of biological role, plays a role in the inducible expression of cytokine genes in T-cells, especially in the induction of the IL-2 or IL-4 gene transcription. Also controls gene expression in embryonic cardiac cells. Could regulate not only the activation and proliferation but also the differentiation and programmed death of T-lymphocytes as well as lymphoid and non-lymphoid cells. Required for osteoclastogenesis and regulates many genes important for osteoclast differentiation and function. The polypeptide is Nuclear factor of activated T-cells, cytoplasmic 1 (NFATC1) (Sus scrofa (Pig)).